The primary structure comprises 25 residues: Ribosome-inactivating protein charantin (25 aa).

Monomer.

It carries out the reaction Endohydrolysis of the N-glycosidic bond at one specific adenosine on the 28S rRNA.. Its function is as follows. Inhibits cell-free translation in a rabbit reticulocyte lysate system. In Momordica charantia (Bitter gourd), this protein is Ribosome-inactivating protein charantin.